The primary structure comprises 352 residues: Photosystem II protein D1 (352 aa).

At Thr-2 the chain carries N-acetylthreonine. Position 2 is a phosphothreonine (Thr-2). A run of 3 helical transmembrane segments spans residues 29-46, 118-133, and 142-156; these read YIGWFGVLMIPTLLTATS, HFFLGICCYMGREWEL, and WIAVAYSAPVAAATA. His-118 is a chlorophyll a binding site. Tyr-126 contacts pheophytin a. [CaMn4O5] cluster is bound by residues Asp-170 and Glu-189. Residues 197–218 traverse the membrane as a helical segment; that stretch reads FHMLGVAGVFGGSLFSAMHGSL. Position 198 (His-198) interacts with chlorophyll a. A quinone-binding positions include His-215 and 264–265; that span reads SF. His-215 contributes to the Fe cation binding site. His-272 contacts Fe cation. Residues 274 to 288 form a helical membrane-spanning segment; it reads FLAAWPVVGIWFTAL. Positions 332, 333, 342, and 344 each coordinate [CaMn4O5] cluster. The propeptide occupies 345-352; sequence SVEAPSIA.

Belongs to the reaction center PufL/M/PsbA/D family. In terms of assembly, PSII is composed of 1 copy each of membrane proteins PsbA, PsbB, PsbC, PsbD, PsbE, PsbF, PsbH, PsbI, PsbJ, PsbK, PsbL, PsbM, PsbT, PsbX, PsbY, PsbZ, Psb30/Ycf12, at least 3 peripheral proteins of the oxygen-evolving complex and a large number of cofactors. It forms dimeric complexes. It depends on The D1/D2 heterodimer binds P680, chlorophylls that are the primary electron donor of PSII, and subsequent electron acceptors. It shares a non-heme iron and each subunit binds pheophytin, quinone, additional chlorophylls, carotenoids and lipids. D1 provides most of the ligands for the Mn4-Ca-O5 cluster of the oxygen-evolving complex (OEC). There is also a Cl(-1) ion associated with D1 and D2, which is required for oxygen evolution. The PSII complex binds additional chlorophylls, carotenoids and specific lipids. as a cofactor. Tyr-161 forms a radical intermediate that is referred to as redox-active TyrZ, YZ or Y-Z. Post-translationally, C-terminally processed by CTPA; processing is essential to allow assembly of the oxygen-evolving complex and thus photosynthetic growth.

Its subcellular location is the plastid. It localises to the chloroplast thylakoid membrane. The enzyme catalyses 2 a plastoquinone + 4 hnu + 2 H2O = 2 a plastoquinol + O2. In terms of biological role, photosystem II (PSII) is a light-driven water:plastoquinone oxidoreductase that uses light energy to abstract electrons from H(2)O, generating O(2) and a proton gradient subsequently used for ATP formation. It consists of a core antenna complex that captures photons, and an electron transfer chain that converts photonic excitation into a charge separation. The D1/D2 (PsbA/PsbD) reaction center heterodimer binds P680, the primary electron donor of PSII as well as several subsequent electron acceptors. The polypeptide is Photosystem II protein D1 (Chlorella ellipsoidea).